A 256-amino-acid polypeptide reads, in one-letter code: uncharacterized protein (256 aa).

I18, S37, K46, D66, Y164, K168, V197, and T199 together coordinate NADP(+). Catalysis depends on Y164, which acts as the Proton donor. K168 (lowers pKa of active site Tyr) is an active-site residue.

It belongs to the short-chain dehydrogenases/reductases (SDR) family.

It is found in the cytoplasm. This is an uncharacterized protein from Saccharomyces cerevisiae (strain ATCC 204508 / S288c) (Baker's yeast).